Consider the following 166-residue polypeptide: MPAWLADGRTLAGLDLGDKTIGVAVSDRGFAFAHPRPVIMRRKFSLDAAVLLALLKKENVGAVAIGLPINMDGSEGPRAQKSRAFVRNMAQLSDLPFVFWDERLSTVAAERTLIEMDFSRAKRAGKIDSAAAAFILQGVLDRLQSLDSAARTELGGRTEPGPTDAA.

The protein belongs to the YqgF nuclease family.

Its subcellular location is the cytoplasm. Could be a nuclease involved in processing of the 5'-end of pre-16S rRNA. The chain is Putative pre-16S rRNA nuclease from Mesorhizobium japonicum (strain LMG 29417 / CECT 9101 / MAFF 303099) (Mesorhizobium loti (strain MAFF 303099)).